The following is a 272-amino-acid chain: MQVLKTIEELQNIRKNSLGKVGLVPTMGALHNGHISLIKQARNENDIVIVSIFVNPTQFLPGEDLDAYPRRDEADKKICQMCKVNYVFMPEISTMYTKEEVLVKAPNKSYILEGKTRPGHFDGVLQVVLKLFNLTQPTNAYFGKKDAQQLTLIQQMVKNFFLPINIVPCDIVREEDGLALSSRNIYLNPTQRKDALLISKSLYMAGSLISSGERSVKAVKDKIYEVMSILDVEYVAIVDKEFNELETIEPTNTIILVVARFGNTRLLDNIWL.

Position 27–34 (27–34 (MGALHNGH)) interacts with ATP. Histidine 34 functions as the Proton donor in the catalytic mechanism. Glutamine 58 contributes to the (R)-pantoate binding site. Position 58 (glutamine 58) interacts with beta-alanine. 143 to 146 (GKKD) lines the ATP pocket. Glutamine 149 contributes to the (R)-pantoate binding site. Residues valine 172 and 180-183 (LSSR) each bind ATP.

It belongs to the pantothenate synthetase family. In terms of assembly, homodimer.

It localises to the cytoplasm. The enzyme catalyses (R)-pantoate + beta-alanine + ATP = (R)-pantothenate + AMP + diphosphate + H(+). It participates in cofactor biosynthesis; (R)-pantothenate biosynthesis; (R)-pantothenate from (R)-pantoate and beta-alanine: step 1/1. In terms of biological role, catalyzes the condensation of pantoate with beta-alanine in an ATP-dependent reaction via a pantoyl-adenylate intermediate. This Aliarcobacter butzleri (strain RM4018) (Arcobacter butzleri) protein is Pantothenate synthetase.